A 240-amino-acid chain; its full sequence is 2,3,4,5-tetrahydropyridine-2,6-dicarboxylate N-acetyltransferase (240 aa).

It belongs to the transferase hexapeptide repeat family. DapH subfamily.

It catalyses the reaction (S)-2,3,4,5-tetrahydrodipicolinate + acetyl-CoA + H2O = L-2-acetamido-6-oxoheptanedioate + CoA. It participates in amino-acid biosynthesis; L-lysine biosynthesis via DAP pathway; LL-2,6-diaminopimelate from (S)-tetrahydrodipicolinate (acetylase route): step 1/3. Its function is as follows. Catalyzes the transfer of an acetyl group from acetyl-CoA to tetrahydrodipicolinate. The polypeptide is 2,3,4,5-tetrahydropyridine-2,6-dicarboxylate N-acetyltransferase (Bacillus cereus (strain AH187)).